The primary structure comprises 375 residues: MTTTSVDSWLCSSHGMHFITNYSDQASQNFSGVPNVTSCPMDEKLLSTVLTTFYSVIFLVGLVGNIIALYVFLGIHRKRNSIQIYLLNVAVADLLLIFCLPFRIMYHINQNKWTLGVILCKVVGTLFYMNMYISIILLGFISLDRYIKINRSIQQRRAITTKQSIYVCCIVWTVALAGFLTMIILTLKKGGHNSTMCFHYRDRHNAKGEAIFNFVLVVMFWLIFLLIILSYIKIGKNLLRISKRRSKFPNSGKYATTARNSFIVLIIFTICFVPYHAFRFIYISSQLNVSSCYWKEIIHKTNEIMLVFSSFNSCLDPVMYFLMSSNIRKIMCQLLFRRFQSEASRSESTSEFKPGHSLHDLSVTVKMPQYSTKGN.

Residues 1–54 (MTTTSVDSWLCSSHGMHFITNYSDQASQNFSGVPNVTSCPMDEKLLSTVLTTFY) lie on the Extracellular side of the membrane. Asn21, Asn29, and Asn35 each carry an N-linked (GlcNAc...) asparagine glycan. Residues 55–75 (SVIFLVGLVGNIIALYVFLGI) traverse the membrane as a helical segment. The Cytoplasmic portion of the chain corresponds to 76 to 81 (HRKRNS). Residues 82–102 (IQIYLLNVAVADLLLIFCLPF) form a helical membrane-spanning segment. Topologically, residues 103–121 (RIMYHINQNKWTLGVILCK) are extracellular. A disulfide bond links Cys120 and Cys197. A helical membrane pass occupies residues 122–142 (VVGTLFYMNMYISIILLGFIS). Over 143-164 (LDRYIKINRSIQQRRAITTKQS) the chain is Cytoplasmic. Residues 165-185 (IYVCCIVWTVALAGFLTMIIL) form a helical membrane-spanning segment. The Extracellular segment spans residues 186–209 (TLKKGGHNSTMCFHYRDRHNAKGE). Asn193 is a glycosylation site (N-linked (GlcNAc...) asparagine). A helical membrane pass occupies residues 210–230 (AIFNFVLVVMFWLIFLLIILS). Over 231–262 (YIKIGKNLLRISKRRSKFPNSGKYATTARNSF) the chain is Cytoplasmic. Residues 263–283 (IVLIIFTICFVPYHAFRFIYI) form a helical membrane-spanning segment. At 284-303 (SSQLNVSSCYWKEIIHKTNE) the chain is on the extracellular side. Residue Asn288 is glycosylated (N-linked (GlcNAc...) asparagine). Residues 304–324 (IMLVFSSFNSCLDPVMYFLMS) traverse the membrane as a helical segment. Topologically, residues 325–375 (SNIRKIMCQLLFRRFQSEASRSESTSEFKPGHSLHDLSVTVKMPQYSTKGN) are cytoplasmic.

Belongs to the G-protein coupled receptor 1 family. In terms of tissue distribution, highly expressed in glial cells such as astrocytes and microglia.

The protein resides in the cell membrane. In terms of biological role, G-protein-coupled receptor of lysophosphatidylserine (LysoPS) that plays different roles in immune response. Acts a damage-sensing receptor that triggers tissue repair upon recognition of dying neutrophils. Mechanistically, apoptotic neutrophils release lysophosphatydilserine that are recognized by type 3 innate lymphoid cells (ILC3s) via GPR34, which activates downstream PI3K-AKT and RAS-ERK signaling pathways leading to STAT3 activation and IL-22 production. Plays an important role in microglial function, controlling morphology and phagocytosis. In Mus musculus (Mouse), this protein is Probable G-protein coupled receptor 34 (Gpr34).